Consider the following 188-residue polypeptide: Holliday junction branch migration complex subunit RuvA (188 aa).

Residues 1–63 (MIEIIEGIYK…QEDMTIYGFD (63 aa)) are domain I. The segment at 64–142 (SKVKKETFEK…VVEVNEEMLE (79 aa)) is domain II. Position 142 (Glu-142) is a region of interest, flexible linker. Residues 142 to 188 (EAIEALVSLGYSKTQARNAVSKVLKESPNISNVSKIIKEALKILAKI) form a domain III region.

It belongs to the RuvA family. As to quaternary structure, homotetramer. Forms an RuvA(8)-RuvB(12)-Holliday junction (HJ) complex. HJ DNA is sandwiched between 2 RuvA tetramers; dsDNA enters through RuvA and exits via RuvB. An RuvB hexamer assembles on each DNA strand where it exits the tetramer. Each RuvB hexamer is contacted by two RuvA subunits (via domain III) on 2 adjacent RuvB subunits; this complex drives branch migration. In the full resolvosome a probable DNA-RuvA(4)-RuvB(12)-RuvC(2) complex forms which resolves the HJ.

Its subcellular location is the cytoplasm. The RuvA-RuvB-RuvC complex processes Holliday junction (HJ) DNA during genetic recombination and DNA repair, while the RuvA-RuvB complex plays an important role in the rescue of blocked DNA replication forks via replication fork reversal (RFR). RuvA specifically binds to HJ cruciform DNA, conferring on it an open structure. The RuvB hexamer acts as an ATP-dependent pump, pulling dsDNA into and through the RuvAB complex. HJ branch migration allows RuvC to scan DNA until it finds its consensus sequence, where it cleaves and resolves the cruciform DNA. This chain is Holliday junction branch migration complex subunit RuvA, found in Fervidobacterium nodosum (strain ATCC 35602 / DSM 5306 / Rt17-B1).